The primary structure comprises 357 residues: UDP-N-acetylglucosamine--N-acetylmuramyl-(pentapeptide) pyrophosphoryl-undecaprenol N-acetylglucosamine transferase (357 aa).

Residues 15–17 (TGG), N124, R165, S194, and Q288 each bind UDP-N-acetyl-alpha-D-glucosamine.

The protein belongs to the glycosyltransferase 28 family. MurG subfamily.

Its subcellular location is the cell inner membrane. It catalyses the reaction di-trans,octa-cis-undecaprenyl diphospho-N-acetyl-alpha-D-muramoyl-L-alanyl-D-glutamyl-meso-2,6-diaminopimeloyl-D-alanyl-D-alanine + UDP-N-acetyl-alpha-D-glucosamine = di-trans,octa-cis-undecaprenyl diphospho-[N-acetyl-alpha-D-glucosaminyl-(1-&gt;4)]-N-acetyl-alpha-D-muramoyl-L-alanyl-D-glutamyl-meso-2,6-diaminopimeloyl-D-alanyl-D-alanine + UDP + H(+). It participates in cell wall biogenesis; peptidoglycan biosynthesis. Its function is as follows. Cell wall formation. Catalyzes the transfer of a GlcNAc subunit on undecaprenyl-pyrophosphoryl-MurNAc-pentapeptide (lipid intermediate I) to form undecaprenyl-pyrophosphoryl-MurNAc-(pentapeptide)GlcNAc (lipid intermediate II). The chain is UDP-N-acetylglucosamine--N-acetylmuramyl-(pentapeptide) pyrophosphoryl-undecaprenol N-acetylglucosamine transferase from Nostoc sp. (strain PCC 7120 / SAG 25.82 / UTEX 2576).